Reading from the N-terminus, the 273-residue chain is 2,3,4,5-tetrahydropyridine-2,6-dicarboxylate N-succinyltransferase (273 aa).

Belongs to the transferase hexapeptide repeat family.

The protein resides in the cytoplasm. The enzyme catalyses (S)-2,3,4,5-tetrahydrodipicolinate + succinyl-CoA + H2O = (S)-2-succinylamino-6-oxoheptanedioate + CoA. Its pathway is amino-acid biosynthesis; L-lysine biosynthesis via DAP pathway; LL-2,6-diaminopimelate from (S)-tetrahydrodipicolinate (succinylase route): step 1/3. The chain is 2,3,4,5-tetrahydropyridine-2,6-dicarboxylate N-succinyltransferase from Bordetella petrii (strain ATCC BAA-461 / DSM 12804 / CCUG 43448).